A 217-amino-acid chain; its full sequence is Melanocortin-2 receptor accessory protein 2A (217 aa).

An N-linked (GlcNAc...) asparagine glycan is attached at N8. A helical membrane pass occupies residues 42 to 62; the sequence is IVIGFWVGLAVFVIFMFFVLT.

Belongs to the MRAP family. Interacts with mc4r.

It localises to the cell membrane. Its subcellular location is the endoplasmic reticulum membrane. Inhibitor of melanocortin receptor 4 (mc4r), a receptor involved in energy homeostasis. Plays a role during larval development in the control of energy homeostasis and body weight regulation by decreasing ligand-sensitivity of mc4r and mc4r-mediated generation of cAMP, leading to stimulate growth during larval development. Acts by stabilizing an inactive conformation of mc4r during embryonic development, when all the energy consumed is obtained from the yolk sac, possibly to speed the rapid maturation to the mobile free-feeding juvenile stage reached at 5 dpf. The protein is Melanocortin-2 receptor accessory protein 2A (mrap2a) of Danio rerio (Zebrafish).